Reading from the N-terminus, the 144-residue chain is Large ribosomal subunit protein uL16 (144 aa).

The protein belongs to the universal ribosomal protein uL16 family. In terms of assembly, part of the 50S ribosomal subunit.

In terms of biological role, binds 23S rRNA and is also seen to make contacts with the A and possibly P site tRNAs. This Bacillus cytotoxicus (strain DSM 22905 / CIP 110041 / 391-98 / NVH 391-98) protein is Large ribosomal subunit protein uL16.